The chain runs to 391 residues: Elongation factor Tu (391 aa).

The tr-type G domain maps to 10-201 (KPHVNIGTIG…AVDDYIPTPA (192 aa)). The tract at residues 19 to 26 (GHVDHGKT) is G1. Residue 19–26 (GHVDHGKT) coordinates GTP. Residue Thr26 participates in Mg(2+) binding. Positions 55-59 (GITIS) are G2. The segment at 76–79 (DCPG) is G3. GTP contacts are provided by residues 76–80 (DCPGH) and 131–134 (NKVD). The G4 stretch occupies residues 131-134 (NKVD). A G5 region spans residues 169 to 171 (SAL).

Belongs to the TRAFAC class translation factor GTPase superfamily. Classic translation factor GTPase family. EF-Tu/EF-1A subfamily. In terms of assembly, monomer.

Its subcellular location is the cytoplasm. It catalyses the reaction GTP + H2O = GDP + phosphate + H(+). GTP hydrolase that promotes the GTP-dependent binding of aminoacyl-tRNA to the A-site of ribosomes during protein biosynthesis. This chain is Elongation factor Tu, found in Dinoroseobacter shibae (strain DSM 16493 / NCIMB 14021 / DFL 12).